We begin with the raw amino-acid sequence, 579 residues long: Potassium-transporting ATPase potassium-binding subunit (579 aa).

Helical transmembrane passes span 1–21 (MISNSVIQIGIFLVVLMACVV), 64–84 (HYALALLGFNAMGMLLLYGLQ), 135–155 (GLTVQNFVSAATGMAVLIGLI), 178–198 (IYILLPLALVLSVTLVSQGVV), 265–285 (FLELLSILLIPAALCYTFGLM), 293–313 (WAILATMTIILLGFTVLAVSA), 398–418 (GLYGMLIFAIIAVFVAGLMVG), 435–455 (MAALIILIPCVMTLLITAIAV), 503–523 (WLGIAMLVSRFWLIVPTLAIA), and 549–569 (LLIGVVLIVGALTFIPALALG).

It belongs to the KdpA family. As to quaternary structure, the system is composed of three essential subunits: KdpA, KdpB and KdpC.

The protein localises to the cell membrane. In terms of biological role, part of the high-affinity ATP-driven potassium transport (or Kdp) system, which catalyzes the hydrolysis of ATP coupled with the electrogenic transport of potassium into the cytoplasm. This subunit binds the extracellular potassium ions and delivers the ions to the membrane domain of KdpB through an intramembrane tunnel. The protein is Potassium-transporting ATPase potassium-binding subunit of Herpetosiphon aurantiacus (strain ATCC 23779 / DSM 785 / 114-95).